The following is a 591-amino-acid chain: Proteasome-associated ATPase (591 aa).

Positions 10-77 (VAAAEELHAL…LREEVDRLGQ (68 aa)) form a coiled coil. An ATP-binding site is contributed by 278 to 283 (GCGKTL). The segment at 590–591 (YL) is docks into pockets in the proteasome alpha-ring.

This sequence belongs to the AAA ATPase family. In terms of assembly, homohexamer. Assembles into a hexameric ring structure that likely caps the 20S proteasome core. Can form a complex composed of two stacked hexameric rings in vitro. Probably interacts with the prokaryotic ubiquitin-like protein Pup through a hydrophobic interface; the expected interacting region of ARC lies in its N-terminal coiled-coil domain. There is likely one Pup binding site per ARC hexamer ring. Upon ATP-binding, the C-terminus of ARC probably interacts with the alpha-rings of the proteasome core, possibly by binding to the intersubunit pockets.

Its pathway is protein degradation; proteasomal Pup-dependent pathway. ATPase activity is inhibited by N-ethylmaleimide (NEM) but not by sodium azide. In terms of biological role, ATPase which is responsible for recognizing, binding, unfolding and translocation of pupylated proteins into the bacterial 20S proteasome core particle. May be essential for opening the gate of the 20S proteasome via an interaction with its C-terminus, thereby allowing substrate entry and access to the site of proteolysis. Thus, the C-termini of the proteasomal ATPase may function like a 'key in a lock' to induce gate opening and therefore regulate proteolysis. The sequence is that of Proteasome-associated ATPase from Rhodococcus erythropolis (Arthrobacter picolinophilus).